The sequence spans 883 residues: Aldehyde-alcohol dehydrogenase (883 aa).

The tract at residues 13-456 (KLVAEKHVDE…DNVSAINLLN (444 aa)) is aldehyde dehydrogenase. NAD(+)-binding positions include 121–126 (ITPTTN), Gly206, and Gly224. Cys257 serves as the catalytic Nucleophile. Residues Glu355, Leu435, and 438-443 (GSYGRN) contribute to the NAD(+) site. Positions 457 to 464 (IKKVGRRR) are linker. NAD(+)-binding positions include Asp500, Asp534, 561–565 (GSPMD), 612–613 (TT), Val625, Lys634, and Leu653. The Fe cation site is built by Asp668, His672, His736, and His750.

This sequence in the N-terminal section; belongs to the aldehyde dehydrogenase family. The protein in the C-terminal section; belongs to the iron-containing alcohol dehydrogenase family. Fe(2+) is required as a cofactor.

The enzyme catalyses an aldehyde + NAD(+) + H2O = a carboxylate + NADH + 2 H(+). It carries out the reaction ethanol + NAD(+) = acetaldehyde + NADH + H(+). Has alcohol dehydrogenase activity. Has aldehyde dehydrogenase activity. Plays a role in enhancing virulence in mice, under ethanol stress conditions, perhaps by inducing expression of pneumolysin (Ply) and increasing production of hydrogen peroxide H(2)O(2). May be considered a potential virulence factor. This Streptococcus pneumoniae serotype 2 (strain D39 / NCTC 7466) protein is Aldehyde-alcohol dehydrogenase.